A 1946-amino-acid polypeptide reads, in one-letter code: 1,3-beta-glucan synthase component (1946 aa).

Disordered regions lie at residues 1–127 and 152–198; these read MSGY…FSDF and YGEG…KEPY. 3 stretches are compositionally biased toward low complexity: residues 24 to 34, 43 to 60, and 91 to 109; these read GYYQDDQYYDQ, GDHAAQGDHGAQGTQGDG, and DDYYNNNQGYYDGEYNQGY. Residues 165-180 are compositionally biased toward polar residues; that stretch reads QLSYGGNRSSGASTPN. Residues asparagine 171 and asparagine 290 are each glycosylated (N-linked (GlcNAc...) asparagine). Positions 297–316 are disordered; sequence KRKAKKGKKKGGEAGNEAET. Transmembrane regions (helical) follow at residues 489–509, 537–557, 576–596, 618–638, 675–695, and 734–754; these read WFHLLLNFNRIWVIHLTMFWF, FSIVGFGGAIASLIQIFATLA, LLFLIVILVLNVAPGVKVFMF, IGIVHFVIAVFTFLFFSVMPL, FGLWLTVFGAKFGESYVYLTL, and IVLILMTFTDLIFFFLDTYLF. N-linked (GlcNAc...) asparagine glycosylation is found at asparagine 1017 and asparagine 1312. 5 helical membrane-spanning segments follow: residues 1356–1376, 1413–1433, 1500–1520, 1523–1543, and 1615–1635; these read NMFIMLSVQSFMLTLMSIGAL, CIISIFFVFFISFVPLIVQEL, FAGQSIYFGARLLMMLLFATS, WQPALTYFWIVLLGLIISPFL, and IFLTEILTPLLLAATTTVAYL. An N-linked (GlcNAc...) asparagine glycan is attached at asparagine 1649. A run of 5 helical transmembrane segments spans residues 1667–1687, 1703–1723, 1738–1758, 1803–1823, and 1864–1884; these read LAVVAFAPIGINAGVLAAMFG, FGPVLAGIAHGAAAVFMIIFF, LAGIIAAMCIQRFIFKLIVSL, FSADFILGHWILFMMAPLILI, and AILYFVLFIIFLALVVAPGVI. Asparagine 1918 is a glycosylation site (N-linked (GlcNAc...) asparagine). Residues 1920–1946 form a disordered region; it reads TEGKTETGTKAGGADASATDASKLRLF. Residues 1925-1940 are compositionally biased toward low complexity; sequence ETGTKAGGADASATDA.

The protein belongs to the glycosyltransferase 48 family. As to quaternary structure, component of the 1,3-beta-glucan synthase (GS) complex composed of a catalytic subunit GLS1 and a regulatory subunit RHO1.

The protein localises to the membrane. It localises to the cell membrane. The catalysed reaction is [(1-&gt;3)-beta-D-glucosyl](n) + UDP-alpha-D-glucose = [(1-&gt;3)-beta-D-glucosyl](n+1) + UDP + H(+). Its activity is regulated as follows. Activated by iron ions. Inhibited by manganese, copper and zinc ions. Its function is as follows. Catalytic subunit of the 1,3-beta-glucan synthase (GS). Synthesizes 1,3-beta-glucan, a major structural component of the fungal cell wall. Involved in cell wall synthesis, maintenance and remodeling. The polypeptide is 1,3-beta-glucan synthase component (Cordyceps militaris (strain CM01) (Caterpillar fungus)).